A 478-amino-acid chain; its full sequence is ATP synthase subunit beta (478 aa).

151 to 158 (GGAGVGKT) is a binding site for ATP.

The protein belongs to the ATPase alpha/beta chains family. In terms of assembly, F-type ATPases have 2 components, CF(1) - the catalytic core - and CF(0) - the membrane proton channel. CF(1) has five subunits: alpha(3), beta(3), gamma(1), delta(1), epsilon(1). CF(0) has three main subunits: a(1), b(2) and c(9-12). The alpha and beta chains form an alternating ring which encloses part of the gamma chain. CF(1) is attached to CF(0) by a central stalk formed by the gamma and epsilon chains, while a peripheral stalk is formed by the delta and b chains.

It is found in the cell inner membrane. It carries out the reaction ATP + H2O + 4 H(+)(in) = ADP + phosphate + 5 H(+)(out). In terms of biological role, produces ATP from ADP in the presence of a proton gradient across the membrane. The catalytic sites are hosted primarily by the beta subunits. The polypeptide is ATP synthase subunit beta (Azorhizobium caulinodans (strain ATCC 43989 / DSM 5975 / JCM 20966 / LMG 6465 / NBRC 14845 / NCIMB 13405 / ORS 571)).